The sequence spans 271 residues: tRNA (guanine-N(1)-)-methyltransferase (271 aa).

Residues Gly-120 and 145–150 (IGDYVL) each bind S-adenosyl-L-methionine.

The protein belongs to the RNA methyltransferase TrmD family. As to quaternary structure, homodimer.

The protein resides in the cytoplasm. The catalysed reaction is guanosine(37) in tRNA + S-adenosyl-L-methionine = N(1)-methylguanosine(37) in tRNA + S-adenosyl-L-homocysteine + H(+). In terms of biological role, specifically methylates guanosine-37 in various tRNAs. The chain is tRNA (guanine-N(1)-)-methyltransferase from Bifidobacterium longum subsp. infantis (strain ATCC 15697 / DSM 20088 / JCM 1222 / NCTC 11817 / S12).